The chain runs to 546 residues: CTP synthase (546 aa).

The amidoligase domain stretch occupies residues 1-266 (MTTNYIFVTG…DDLVCQRFGI (266 aa)). Residue Ser14 participates in CTP binding. Ser14 serves as a coordination point for UTP. Residues 15–20 (SLGKGI) and Asp72 each bind ATP. The Mg(2+) site is built by Asp72 and Glu140. Residues 147–149 (DIE), 187–192 (KTKPTQ), and Lys223 each bind CTP. UTP contacts are provided by residues 187–192 (KTKPTQ) and Lys223. 239 to 241 (KDV) contributes to the ATP binding site. Residues 291–542 (TIGMVGKYIE…VKAAGENARG (252 aa)) enclose the Glutamine amidotransferase type-1 domain. Gly352 provides a ligand contact to L-glutamine. Cys379 (nucleophile; for glutamine hydrolysis) is an active-site residue. Residues 380 to 383 (LGMQ), Glu403, and Arg470 each bind L-glutamine. Catalysis depends on residues His515 and Glu517.

The protein belongs to the CTP synthase family. Homotetramer.

The catalysed reaction is UTP + L-glutamine + ATP + H2O = CTP + L-glutamate + ADP + phosphate + 2 H(+). The enzyme catalyses L-glutamine + H2O = L-glutamate + NH4(+). It carries out the reaction UTP + NH4(+) + ATP = CTP + ADP + phosphate + 2 H(+). It functions in the pathway pyrimidine metabolism; CTP biosynthesis via de novo pathway; CTP from UDP: step 2/2. With respect to regulation, allosterically activated by GTP, when glutamine is the substrate; GTP has no effect on the reaction when ammonia is the substrate. The allosteric effector GTP functions by stabilizing the protein conformation that binds the tetrahedral intermediate(s) formed during glutamine hydrolysis. Inhibited by the product CTP, via allosteric rather than competitive inhibition. Its function is as follows. Catalyzes the ATP-dependent amination of UTP to CTP with either L-glutamine or ammonia as the source of nitrogen. Regulates intracellular CTP levels through interactions with the four ribonucleotide triphosphates. In Aliivibrio salmonicida (strain LFI1238) (Vibrio salmonicida (strain LFI1238)), this protein is CTP synthase.